The following is a 162-amino-acid chain: ATP synthase subunit b (162 aa).

A helical membrane pass occupies residues 10–29 (LIWTIINFAVLLWGMHRFLY).

It belongs to the ATPase B chain family. F-type ATPases have 2 components, F(1) - the catalytic core - and F(0) - the membrane proton channel. F(1) has five subunits: alpha(3), beta(3), gamma(1), delta(1), epsilon(1). F(0) has three main subunits: a(1), b(2) and c(10-14). The alpha and beta chains form an alternating ring which encloses part of the gamma chain. F(1) is attached to F(0) by a central stalk formed by the gamma and epsilon chains, while a peripheral stalk is formed by the delta and b chains.

It is found in the cell membrane. In terms of biological role, f(1)F(0) ATP synthase produces ATP from ADP in the presence of a proton or sodium gradient. F-type ATPases consist of two structural domains, F(1) containing the extramembraneous catalytic core and F(0) containing the membrane proton channel, linked together by a central stalk and a peripheral stalk. During catalysis, ATP synthesis in the catalytic domain of F(1) is coupled via a rotary mechanism of the central stalk subunits to proton translocation. Its function is as follows. Component of the F(0) channel, it forms part of the peripheral stalk, linking F(1) to F(0). This Symbiobacterium thermophilum (strain DSM 24528 / JCM 14929 / IAM 14863 / T) protein is ATP synthase subunit b.